The primary structure comprises 269 residues: Putative hydro-lyase Atu3911 (269 aa).

The protein belongs to the D-glutamate cyclase family.

This chain is Putative hydro-lyase Atu3911, found in Agrobacterium fabrum (strain C58 / ATCC 33970) (Agrobacterium tumefaciens (strain C58)).